The following is a 452-amino-acid chain: UDP-N-acetylmuramoyl-tripeptide--D-alanyl-D-alanine ligase (452 aa).

Residue 113 to 119 (GSNGKTT) coordinates ATP.

It belongs to the MurCDEF family. MurF subfamily.

The protein resides in the cytoplasm. It catalyses the reaction UDP-N-acetyl-alpha-D-muramoyl-L-alanyl-gamma-D-glutamyl-L-lysine + D-alanyl-D-alanine + ATP = UDP-N-acetyl-alpha-D-muramoyl-L-alanyl-gamma-D-glutamyl-L-lysyl-D-alanyl-D-alanine + ADP + phosphate + H(+). Its pathway is cell wall biogenesis; peptidoglycan biosynthesis. Functionally, involved in cell wall formation. Catalyzes the final step in the synthesis of UDP-N-acetylmuramoyl-pentapeptide, the precursor of murein. Catalyzes the addition of D-alanyl-D-alanine to UDP-MurNAc-L-alanyl-gamma-D-glutamyl-L-lysine. In vitro, can also use the mesodiaminopimelic acid-containing form of UDP-MurNAc-tripeptide, with the same efficiency, revealing that the discrimination for the amino acid residue at the third position of the peptide in the peptidoglycans is entirely supported by MurE. This chain is UDP-N-acetylmuramoyl-tripeptide--D-alanyl-D-alanine ligase, found in Staphylococcus aureus (strain NCTC 8325 / PS 47).